A 390-amino-acid polypeptide reads, in one-letter code: MRKMLAAVSRVLSGASQKPASRVLVASRNFANDATFEIKKCDLHRLEEGPPVTTVLTREDGLKYYRMMQTVRRMELKADQLYKQKIIRGFCHLCDGQEACCVGLEAGINPTDHLITAYRAHGFTFTRGLSVREILAELTGRKGGCAKGKGGSTHMYAKNFYRGNGIVGAQVPLGAGIALACKYNGKDEVCLTLYGDGAADQGQIFEAYNMAALWKLPCIFICENNRYGMGTSVERAAASTDYYKRGDFIPGLRVDGMDILCVREATRFAAAYCRSGKGPILMELQTYRYHGHSMSDPGVSYRTREEIQEVRSKSDPIMLLKDRMVNSNLASVEELKEIDVEVRKEIEDAAQFATADPEPPLEELGYHIYSSDPPFEVRGANQWIKFKSVS.

A mitochondrion-targeting transit peptide spans 1 to 29 (MRKMLAAVSRVLSGASQKPASRVLVASRN). Lysine 63 carries the post-translational modification N6-acetyllysine; alternate. The residue at position 63 (lysine 63) is an N6-succinyllysine; alternate. Pyruvate is bound by residues histidine 92, tyrosine 118, arginine 119, alanine 157, glycine 165, valine 167, aspartate 196, glycine 197, alanine 198, asparagine 225, and tyrosine 227. Residues tyrosine 118 and arginine 119 each coordinate thiamine diphosphate. The thiamine diphosphate site is built by glycine 165, valine 167, aspartate 196, glycine 197, alanine 198, and asparagine 225. Residue aspartate 196 coordinates Mg(2+). Asparagine 225 and tyrosine 227 together coordinate Mg(2+). Phosphoserine; by PDK1 is present on serine 232. The residue at position 244 (lysine 244) is an N6-acetyllysine; alternate. Lysine 244 is subject to N6-succinyllysine; alternate. Position 277 is an N6-succinyllysine (lysine 277). Histidine 292 contacts thiamine diphosphate. Serine 293 carries the post-translational modification Phosphoserine; by PDK1, PDK2, PDK3 and PDK4. Serine 295 is subject to Phosphoserine. Residue serine 300 is modified to Phosphoserine; by PDK1, PDK2, PDK3 and PDK4. Tyrosine 301 is subject to Phosphotyrosine. Lysine 313 is subject to N6-acetyllysine; alternate. Lysine 313 is subject to N6-succinyllysine; alternate. N6-acetyllysine is present on residues lysine 321 and lysine 336. Residue lysine 385 is modified to N6-succinyllysine.

Heterotetramer of two PDHA1 and two PDHB subunits. The heterotetramer interacts with DLAT, and is part of the multimeric pyruvate dehydrogenase complex that contains multiple copies of pyruvate dehydrogenase (E1), dihydrolipoamide acetyltransferase (DLAT, E2) and lipoamide dehydrogenase (DLD, E3). These subunits are bound to an inner core composed of about 48 DLAT and 12 PDHX molecules. It depends on thiamine diphosphate as a cofactor. Mg(2+) is required as a cofactor. Post-translationally, phosphorylation at Ser-232, Ser-293 and Ser-300 by PDK family kinases inactivates the enzyme; for this phosphorylation at a single site is sufficient. Phosphorylation at Ser-293 interferes with access to active site, and thereby inactivates the enzyme. Dephosphorylation at all three sites, i.e. at Ser-232, Ser-293 and Ser-300, is required for reactivation. Acetylation alters the phosphorylation pattern. Deacetylated by SIRT3.

Its subcellular location is the mitochondrion matrix. It catalyses the reaction N(6)-[(R)-lipoyl]-L-lysyl-[protein] + pyruvate + H(+) = N(6)-[(R)-S(8)-acetyldihydrolipoyl]-L-lysyl-[protein] + CO2. Its activity is regulated as follows. Pyruvate dehydrogenase activity is inhibited by phosphorylation of PDHA1; it is reactivated by dephosphorylation. In terms of biological role, the pyruvate dehydrogenase complex catalyzes the overall conversion of pyruvate to acetyl-CoA and CO(2), and thereby links the glycolytic pathway to the tricarboxylic cycle. The protein is Pyruvate dehydrogenase E1 component subunit alpha, somatic form, mitochondrial (PDHA1) of Macaca fascicularis (Crab-eating macaque).